We begin with the raw amino-acid sequence, 410 residues long: Sensor histidine kinase GlnK (410 aa).

Residues 1–15 (MLITVPLAGELKFYP) lie on the Extracellular side of the membrane. The chain crosses the membrane as a helical span at residues 16-36 (LNEEFRVSFGAPVFFFFLSLL). At 37 to 38 (RH) the chain is on the cytoplasmic side. A helical transmembrane segment spans residues 39–59 (VPAVLPGFLTGAAVFIFRVFL). Topologically, residues 60-71 (ELWGGGHNGLTP) are extracellular. The chain crosses the membrane as a helical span at residues 72–92 (ILYDQASGFFFYMTYACLFSI). At 93–102 (LKANRFRERP) the chain is on the cytoplasmic side. Residues 103 to 123 (IMLGFIGFMIEVVSDCVELTV) form a helical membrane-spanning segment. Topologically, residues 124-139 (QFLIFHTVVTPEKITD) are extracellular. Residues 140–160 (IAVIAISHTFIVMSFYSVLKL) traverse the membrane as a helical segment. The Cytoplasmic portion of the chain corresponds to 161–410 (YETQSREKQT…LPVRHLIQKG (250 aa)). In terms of domain architecture, Histidine kinase spans 189 to 405 (VHLKKTLKTT…VFAIRLPVRH (217 aa)). His-190 is modified (phosphohistidine; by autocatalysis).

As to quaternary structure, homotrimer. Under poor nitrogen source such as nitrate, the complex between GlnK and AmtB, which are the transmembrane ammonium transporter and its cognate regulator, respectively, interacts with TnrA. GlnK-ATP complex are not able to bind TnrA.

It is found in the cell membrane. The catalysed reaction is ATP + protein L-histidine = ADP + protein N-phospho-L-histidine.. Member of the two-component regulatory system GlnK/GlnL that positively regulates the expression of the glsA-glnT operon in response to glutamine. It seems that autophosphorylated GlnK transfers a phosphoryl group to GlnL, which positively regulates the expression of the glsA-glnT operon. Interaction between GlnK-AmtB complex and TnrA protects TnrA from proteolytic degradation. This chain is Sensor histidine kinase GlnK, found in Bacillus subtilis (strain 168).